The following is a 488-amino-acid chain: ATP synthase subunit beta (488 aa).

164–171 (GGAGVGKT) contacts ATP.

It belongs to the ATPase alpha/beta chains family. F-type ATPases have 2 components, CF(1) - the catalytic core - and CF(0) - the membrane proton channel. CF(1) has five subunits: alpha(3), beta(3), gamma(1), delta(1), epsilon(1). CF(0) has four main subunits: a(1), b(1), b'(1) and c(9-12).

The protein resides in the cellular thylakoid membrane. The enzyme catalyses ATP + H2O + 4 H(+)(in) = ADP + phosphate + 5 H(+)(out). Produces ATP from ADP in the presence of a proton gradient across the membrane. The catalytic sites are hosted primarily by the beta subunits. This Prochlorococcus marinus (strain SARG / CCMP1375 / SS120) protein is ATP synthase subunit beta.